A 1942-amino-acid polypeptide reads, in one-letter code: Myosin-1 (1942 aa).

One can recognise a Myosin N-terminal SH3-like domain in the interval 33–82; sequence DAKSSVFVVDAKESFVKATVQSREGGKVTAKTEGGTTVTVKDDQVYPMNP. Residue Ser-36 is modified to Phosphoserine. Phosphothreonine occurs at positions 64 and 69. The region spanning 86–785 is the Myosin motor domain; sequence DKIEDMAMMT…LLGLLEEMRD (700 aa). Lys-130 carries the post-translational modification N6,N6,N6-trimethyllysine. 179-186 provides a ligand contact to ATP; it reads GESGAGKT. Phosphotyrosine is present on Tyr-389. Thr-419 carries the phosphothreonine modification. Tyr-424 is subject to Phosphotyrosine. Position 625 is a phosphoserine (Ser-625). The interval 662–684 is actin-binding; it reads LNKLMTNLRSTHPHFVRCIIPNE. His-760 bears the Pros-methylhistidine mark. The segment at 764-778 is actin-binding; sequence KFGHTKVFFKAGLLG. Residues 788-817 enclose the IQ domain; sequence LAQLITRTQAMCRGYLARVEYQKMVERRES. Residues 846–1942 adopt a coiled-coil conformation; sequence LLKSAETEKE…EVHTKIISEE (1097 aa). Ser-1095, Ser-1099, Ser-1165, Ser-1240, and Ser-1246 each carry phosphoserine. The tract at residues 1156-1175 is disordered; sequence RLEEAGGATSAQIEMNKKRE. Thr-1258 bears the Phosphothreonine mark. A Phosphoserine modification is found at Ser-1264. A phosphothreonine mark is found at Thr-1268 and Thr-1289. Phosphoserine is present on residues Ser-1291, Ser-1295, Ser-1306, and Ser-1309. Position 1467 is a phosphotyrosine (Tyr-1467). Thr-1470 is modified (phosphothreonine). At Ser-1477 the chain carries Phosphoserine. At Tyr-1495 the chain carries Phosphotyrosine. Ser-1498 is subject to Phosphoserine. The residue at position 1504 (Thr-1504) is a Phosphothreonine. Phosphoserine is present on Ser-1517. A Phosphothreonine modification is found at Thr-1520. 7 positions are modified to phosphoserine: Ser-1545, Ser-1557, Ser-1577, Ser-1603, Ser-1606, Ser-1717, and Ser-1729. A phosphothreonine mark is found at Thr-1733 and Thr-1739. Ser-1742 carries the phosphoserine modification.

Belongs to the TRAFAC class myosin-kinesin ATPase superfamily. Myosin family. Muscle myosin is a hexameric protein that consists of 2 heavy chain subunits (MHC), 2 alkali light chain subunits (MLC) and 2 regulatory light chain subunits (MLC-2). Interacts with SLC26A5. As to expression, expressed in the cochlea (at protein level). Strongly expressed in spiral ganglion neurons with axonal sprouts and supporting cells around hair cells. In the organ of Corti, it is expressed in inner and outer hair cells, and in supporting cells.

Its subcellular location is the cytoplasm. It localises to the myofibril. Functionally, required for normal hearing. It plays a role in cochlear amplification of auditory stimuli, likely through the positive regulation of prestin (SLC26A5) activity and outer hair cell (OHC) electromotility. This is Myosin-1 from Mus musculus (Mouse).